Here is a 249-residue protein sequence, read N- to C-terminus: Probable transcriptional regulatory protein IL1088 (249 aa).

This sequence belongs to the TACO1 family.

The protein resides in the cytoplasm. The sequence is that of Probable transcriptional regulatory protein IL1088 from Idiomarina loihiensis (strain ATCC BAA-735 / DSM 15497 / L2-TR).